The chain runs to 253 residues: Imidazole glycerol phosphate synthase subunit HisF (253 aa).

Residues D11 and D130 contribute to the active site.

The protein belongs to the HisA/HisF family. As to quaternary structure, heterodimer of HisH and HisF.

It is found in the cytoplasm. The catalysed reaction is 5-[(5-phospho-1-deoxy-D-ribulos-1-ylimino)methylamino]-1-(5-phospho-beta-D-ribosyl)imidazole-4-carboxamide + L-glutamine = D-erythro-1-(imidazol-4-yl)glycerol 3-phosphate + 5-amino-1-(5-phospho-beta-D-ribosyl)imidazole-4-carboxamide + L-glutamate + H(+). It functions in the pathway amino-acid biosynthesis; L-histidine biosynthesis; L-histidine from 5-phospho-alpha-D-ribose 1-diphosphate: step 5/9. In terms of biological role, IGPS catalyzes the conversion of PRFAR and glutamine to IGP, AICAR and glutamate. The HisF subunit catalyzes the cyclization activity that produces IGP and AICAR from PRFAR using the ammonia provided by the HisH subunit. The sequence is that of Imidazole glycerol phosphate synthase subunit HisF from Clostridium botulinum (strain Alaska E43 / Type E3).